The primary structure comprises 129 residues: UPF0325 protein ECA1027 (129 aa).

It belongs to the UPF0325 family.

This Pectobacterium atrosepticum (strain SCRI 1043 / ATCC BAA-672) (Erwinia carotovora subsp. atroseptica) protein is UPF0325 protein ECA1027.